A 364-amino-acid chain; its full sequence is MAAISTSIPVISQPQFTAMNEPQCFYNESIAFFYNRSGKHLATEWNTVSKLVMGLGITVCIFIMLANLLVMVAIYVNRRFHFPIYYLMANLAAADFFAGLAYFYLMFNTGPNTRRLTVSTWLLRQGLIDTSLTASVANLLAIAIERHITVFRMQLHTRMSNRRVVVVIVVIWTMAIVMGAIPSVGWNCICDIENCSNMAPLYSDSYLVFWAIFNLVTFVVMVVLYAHIFGYVRQRTMRMSRHSSGPRRNRDTMMSLLKTVVIVLGAFIICWTPGLVLLLLDVCCPQCDVLAYEKFFLLLAEFNSAMNPIIYSYRDKEMSATFRQILCCQRSENPTGPTEGSDRSASSLNHTILAGVHSNDHSVV.

At 1–50 (MAAISTSIPVISQPQFTAMNEPQCFYNESIAFFYNRSGKHLATEWNTVSK) the chain is on the extracellular side. Disulfide bonds link Cys-24-Cys-190 and Cys-188-Cys-195. Residues Asn-27 and Asn-35 are each glycosylated (N-linked (GlcNAc...) asparagine). Lys-39 contributes to the a 1-acyl-sn-glycero-3-phosphate binding site. Residues 51–75 (LVMGLGITVCIFIMLANLLVMVAIY) traverse the membrane as a helical segment. Topologically, residues 76–83 (VNRRFHFP) are cytoplasmic. Residues 84 to 107 (IYYLMANLAAADFFAGLAYFYLMF) form a helical membrane-spanning segment. Residues 108–121 (NTGPNTRRLTVSTW) lie on the Extracellular side of the membrane. The chain crosses the membrane as a helical span at residues 122–144 (LLRQGLIDTSLTASVANLLAIAI). 124–129 (RQGLID) is an a 1-acyl-sn-glycero-3-phosphate binding site. Residues 145 to 163 (ERHITVFRMQLHTRMSNRR) are Cytoplasmic-facing. The chain crosses the membrane as a helical span at residues 164–184 (VVVVIVVIWTMAIVMGAIPSV). Over 185 to 204 (GWNCICDIENCSNMAPLYSD) the chain is Extracellular. The helical transmembrane segment at 205–225 (SYLVFWAIFNLVTFVVMVVLY) threads the bilayer. Trp-210 serves as a coordination point for a 1-acyl-sn-glycero-3-phosphate. Topologically, residues 226-255 (AHIFGYVRQRTMRMSRHSSGPRRNRDTMMS) are cytoplasmic. The chain crosses the membrane as a helical span at residues 256–280 (LLKTVVIVLGAFIICWTPGLVLLLL). Topologically, residues 281–294 (DVCCPQCDVLAYEK) are extracellular. Cys-284 and Cys-287 are oxidised to a cystine. Residues 295–315 (FFLLLAEFNSAMNPIIYSYRD) form a helical membrane-spanning segment. Residues 316 to 364 (KEMSATFRQILCCQRSENPTGPTEGSDRSASSLNHTILAGVHSNDHSVV) lie on the Cytoplasmic side of the membrane. The residue at position 341 (Ser-341) is a Phosphoserine. Phosphothreonine is present on Thr-351.

This sequence belongs to the G-protein coupled receptor 1 family. As to quaternary structure, interacts with RALA and GRK2. Interacts with GNAQ and GNA13. Interacts with CD14; the interaction is enhanced by exposure to bacterial lipopolysaccharide (LPS). Post-translationally, N-glycosylated. As to expression, expressed in many adult organs, including brain, heart, colon, small intestine, placenta, prostate, ovary, pancreas, testes, spleen, skeletal muscle, and kidney. Little or no expression in liver, lung, thymus, or peripheral blood leukocytes. Detected in lung fibroblasts from bronchoalveolar fluid from patients with idiopathic pulmonary fibrosis. Detected in bone marrow-derived mesenchymal stem cells.

Its subcellular location is the cell surface. It is found in the cell membrane. The protein resides in the endosome. In terms of biological role, receptor for lysophosphatidic acid (LPA). Plays a role in the reorganization of the actin cytoskeleton, cell migration, differentiation and proliferation, and thereby contributes to the responses to tissue damage and infectious agents. Activates downstream signaling cascades via the G(i)/G(o), G(12)/G(13), and G(q) families of heteromeric G proteins. Signaling inhibits adenylyl cyclase activity and decreases cellular cAMP levels. Signaling triggers an increase of cytoplasmic Ca(2+) levels. Activates RALA; this leads to the activation of phospholipase C (PLC) and the formation of inositol 1,4,5-trisphosphate. Signaling mediates activation of down-stream MAP kinases. Contributes to the regulation of cell shape. Promotes Rho-dependent reorganization of the actin cytoskeleton in neuronal cells and neurite retraction. Promotes the activation of Rho and the formation of actin stress fibers. Promotes formation of lamellipodia at the leading edge of migrating cells via activation of RAC1. Through its function as LPA receptor, plays a role in chemotaxis and cell migration, including responses to injury and wounding. Plays a role in triggering inflammation in response to bacterial lipopolysaccharide (LPS) via its interaction with CD14. Promotes cell proliferation in response to LPA. Inhibits the intracellular ciliogenesis pathway in response to LPA and through AKT1 activation. Required for normal skeleton development. May play a role in osteoblast differentiation. Required for normal brain development. Required for normal proliferation, survival and maturation of newly formed neurons in the adult dentate gyrus. Plays a role in pain perception and in the initiation of neuropathic pain. The sequence is that of Lysophosphatidic acid receptor 1 (LPAR1) from Homo sapiens (Human).